Here is a 490-residue protein sequence, read N- to C-terminus: Probable cytochrome P450 308a1 (490 aa).

Cysteine 431 is a binding site for heme.

It belongs to the cytochrome P450 family. Requires heme as cofactor.

The protein resides in the endoplasmic reticulum membrane. Its subcellular location is the microsome membrane. May be involved in the metabolism of insect hormones and in the breakdown of synthetic insecticides. The protein is Probable cytochrome P450 308a1 (Cyp308a1) of Drosophila melanogaster (Fruit fly).